A 345-amino-acid chain; its full sequence is High mobility group protein 20A (345 aa).

Disordered stretches follow at residues 1–124 (MENT…TERP) and 167–198 (QYQN…VRGV). Polar residues-rich tracts occupy residues 32–48 (LSGS…PTLQ) and 57–67 (LQQSGEQQLGN). Over residues 80–94 (TRRGGWTKGRKRKRS) the composition is skewed to basic residues. The HMG box DNA-binding region spans 101–169 (PKAPLTGYVR…RYTKELQQYQ (69 aa)). Basic and acidic residues predominate over residues 112-124 (MNERREQLRTERP). Residues 167–180 (QYQNTDAYQTYSRK) show a composition bias toward polar residues. Positions 227-290 (SKAREAELRQ…QHLQSVRQAL (64 aa)) form a coiled coil.

The protein resides in the nucleus. Plays a role in neuronal differentiation. The chain is High mobility group protein 20A (hmg20a) from Xenopus tropicalis (Western clawed frog).